The chain runs to 610 residues: Calcium-dependent protein kinase 1 (610 aa).

Residue Gly-2 is the site of N-myristoyl glycine attachment. Residue Cys-5 is the site of S-palmitoyl cysteine attachment. The tract at residues Val-17–Leu-133 is disordered. Composition is skewed to basic and acidic residues over residues Leu-47 to Gln-56 and Thr-70 to Ala-117. The segment covering Lys-118–Arg-127 has biased composition (basic residues). Positions Tyr-150–Val-408 constitute a Protein kinase domain. Residues Leu-156 to Thr-164 and Lys-179 contribute to the ATP site. Asp-274 functions as the Proton acceptor in the catalytic mechanism. Ser-314 carries the post-translational modification Phosphoserine. Residues Ala-414–Ile-444 are autoinhibitory domain. EF-hand domains follow at residues Glu-451–Asn-486, Leu-487–Ile-522, Glu-523–Glu-558, and Asp-559–Thr-592. Asp-464, Asp-466, Ser-468, Gln-470, Glu-475, Asp-500, Asp-502, Ser-504, Thr-506, Glu-511, Asp-536, Asp-538, Ser-540, Tyr-542, Glu-547, Asp-570, Asp-572, Asp-574, Arg-576, and Glu-581 together coordinate Ca(2+).

This sequence belongs to the protein kinase superfamily. Ser/Thr protein kinase family. CDPK subfamily. Interacts with 14-3-3 proteins.

Its subcellular location is the peroxisome membrane. The enzyme catalyses L-seryl-[protein] + ATP = O-phospho-L-seryl-[protein] + ADP + H(+). It carries out the reaction L-threonyl-[protein] + ATP = O-phospho-L-threonyl-[protein] + ADP + H(+). Its activity is regulated as follows. Activated by calcium. Autophosphorylation may play an important role in the regulation of the kinase activity. Functionally, may play a role in signal transduction pathways that involve calcium as a second messenger. Phosphorylates the Ca(2+)-ATPase ACA2 resulting in the inhibition of its calcium activation. The polypeptide is Calcium-dependent protein kinase 1 (CPK1) (Arabidopsis thaliana (Mouse-ear cress)).